The chain runs to 356 residues: GDSL esterase/lipase At5g37690 (356 aa).

A signal peptide spans 1 to 18; it reads MMILRLALAIVISTYATA. Catalysis depends on serine 34, which acts as the Nucleophile. Asparagine 116 and asparagine 291 each carry an N-linked (GlcNAc...) asparagine glycan. Active-site residues include aspartate 322 and histidine 325.

Belongs to the 'GDSL' lipolytic enzyme family.

The protein resides in the secreted. This is GDSL esterase/lipase At5g37690 from Arabidopsis thaliana (Mouse-ear cress).